The following is a 202-amino-acid chain: Thymidine kinase (202 aa).

ATP-binding positions include 16 to 23 (GPMFSGKS) and 99 to 102 (DEVQ). Glu-100 acts as the Proton acceptor in catalysis. Zn(2+)-binding residues include Cys-156, Cys-159, Cys-194, and His-197.

This sequence belongs to the thymidine kinase family. In terms of assembly, homotetramer.

It localises to the cytoplasm. The catalysed reaction is thymidine + ATP = dTMP + ADP + H(+). The chain is Thymidine kinase from Deinococcus deserti (strain DSM 17065 / CIP 109153 / LMG 22923 / VCD115).